We begin with the raw amino-acid sequence, 285 residues long: Avenin-like b2 (285 aa).

The N-terminal stretch at 1-18 (MKVFILALLALTATTAIA) is a signal peptide.

Belongs to the prolamin family. Contains disulfide bonds.

Seed storage protein. Might be integrated via inter-chain disulfide bonds within the glutenin polymer. This chain is Avenin-like b2, found in Triticum aestivum (Wheat).